A 202-amino-acid polypeptide reads, in one-letter code: FMN-dependent NADH:quinone oxidoreductase (202 aa).

Residues serine 10, 16 to 18, and 96 to 99 each bind FMN; these read SHS and MYNF.

The protein belongs to the azoreductase type 1 family. In terms of assembly, homodimer. The cofactor is FMN.

The catalysed reaction is 2 a quinone + NADH + H(+) = 2 a 1,4-benzosemiquinone + NAD(+). It catalyses the reaction N,N-dimethyl-1,4-phenylenediamine + anthranilate + 2 NAD(+) = 2-(4-dimethylaminophenyl)diazenylbenzoate + 2 NADH + 2 H(+). Functionally, quinone reductase that provides resistance to thiol-specific stress caused by electrophilic quinones. Also exhibits azoreductase activity. Catalyzes the reductive cleavage of the azo bond in aromatic azo compounds to the corresponding amines. This Hydrogenovibrio crunogenus (strain DSM 25203 / XCL-2) (Thiomicrospira crunogena) protein is FMN-dependent NADH:quinone oxidoreductase.